The chain runs to 219 residues: Transmembrane emp24 domain-containing protein 10 (219 aa).

A signal peptide spans 1–31 (MSGSSGPQAQRGPCPFALLLLLLLGPSSVLA). Residues 1 to 142 (MSGSSGPQAQ…KNYEEIAKVE (142 aa)) are required for interaction with STX17. At 32 to 185 (ISFHLPVNSR…RDTNESTNTR (154 aa)) the chain is on the lumenal side. Residues 41–193 (RKCLREEIHK…TRVLYFSIFS (153 aa)) form the GOLD domain. Residues 147-178 (LEVELRRLEDLSESIVNDFAYMKKREEEMRDT) are required for TMED10 and TMED2 cis-Golgi network localization. Dimethylated arginine occurs at positions 171 and 176. N-linked (GlcNAc...) asparagine glycosylation occurs at asparagine 179. A helical transmembrane segment spans residues 186–206 (VLYFSIFSMFCLIGLATWQVF). Residues 204-219 (QVFYLRRFFKAKKLIE) are interaction with COPG1. The Cytoplasmic portion of the chain corresponds to 207 to 219 (YLRRFFKAKKLIE). Positions 207-219 (YLRRFFKAKKLIE) are interaction with ARF1 and IL1B. Residues 211-212 (FF) carry the COPII vesicle coat-binding motif. The short motif at 211–219 (FFKAKKLIE) is the COPI vesicle coat-binding element.

The protein belongs to the EMP24/GP25L family. As to quaternary structure, predominantly dimeric and to a lesser extent monomeric in the ER. Monomer and dimer in ERGIC and cis-Golgi network. Forms homooligomer (via GOLD domain); the assembly is promoted by direct binding with leaderless cargos and may form a protein channel that facilitates cargo entry into the ERGIC. Forms heterooligomeric complexes with other members of the p24 family such as TMED2, TMED7 and TMED9. Interacts (via GOLD domain) with TMED2 (via GOLD domain); the complex is required for export of TMED10 from the ER to the cis-Golgi network; the complex is proposed to be involved in cis-Golgi network dynamics and / or biogenesis. Associates with the COPI vesicle coat subunits (coatomer). Tetramerization of the cytoplasmic domain at the Golgi membrane in vitro; the complex is proposed to interact with COPI coatomer and induce budding of the vesicles. Interacts with COPG1; the interaction involves TMED10 homodimer. Interacts with ARF1 (GDP-bound); the interaction probably involves a TMED10 oligomer. Interacts with SEC23A, SEC24B, SEC24C and SEC24D components of the coat protein complex II/COPII, indicative of an association of TMED10 with the COPII vesicle coat. Interacts with CD59. Interacts with MPPE1/PGAP5; the complex might recruit and sort GPI-anchored proteins to the ER-exit site, or the interaction might lead to recycling of PGAP5 between the ER and the Golgi. Interacts with F2LR1/PAR2. Interacts with KDELR2/ERD2; the interaction is disrupted by KDELR2 ligand. Found in a complex composed at least of SURF4, TMED2 and TMED10. Associates with the presenilin-dependent gamma-secretase complex. Interacts with STX17; the interaction is direct. Interacts with IL-1; the interaction is direct. Interacts with RAB21 (active GTP-bound form); the interaction is indirect and regulates TMED10 abundance and localization at the Golgi.

It localises to the endoplasmic reticulum membrane. Its subcellular location is the endoplasmic reticulum-Golgi intermediate compartment membrane. It is found in the golgi apparatus membrane. The protein resides in the golgi apparatus. The protein localises to the cis-Golgi network membrane. It localises to the trans-Golgi network membrane. Its subcellular location is the cytoplasmic vesicle. It is found in the secretory vesicle membrane. The protein resides in the cell membrane. The protein localises to the melanosome. In terms of biological role, cargo receptor involved in protein vesicular trafficking and quality control in the endoplasmic reticulum (ER) and Golgi. The p24 protein family is a group of transmembrane proteins that bind coat protein complex I/COPI and coat protein complex II/COPII involved in vesicular trafficking between the membranes. Acts at the lumenal side for incorporation of secretory cargo molecules into transport vesicles and involved in vesicle coat formation at the cytoplasmic side. Mainly functions in the early secretory pathway and cycles between the ER, ER-Golgi intermediate compartment (ERGIC) and Golgi, mediating cargo transport through COPI and COPII-coated vesicles. In COPII vesicle-mediated anterograde transport, involved in the transport of GPI-anchored proteins by acting together with TMED2 as their cargo receptor; the function specifically implies SEC24C and SEC24D of the COPII vesicle coat and lipid raft-like microdomains of the ER. Recognizes GPI anchors structural remodeled in the ER by the GPI inositol-deacylase/PGAP1 and the metallophosphoesterase MPPE1/PGAP5. In COPI vesicle-mediated retrograde transport, involved in the biogenesis of COPI vesicles and vesicle coat recruitment. Involved in trafficking of amyloid beta A4 protein and soluble APP-beta release (independent from the modulation of gamma-secretase activity). Involved in the KDELR2-mediated retrograde transport of the toxin A subunit (CTX-A-K63)together with COPI and the COOH terminus of KDELR2. On Golgi membranes, acts as a primary receptor for ARF1-GDP, a GTP-binding protein involved in COPI-vesicle formation. Increases coatomer-dependent GTPase-activating activity of ARFGAP2 which mediates the hydrolysis of ARF1-bound GTP and therefore modulates protein trafficking from the Golgi apparatus. Involved in the exocytic trafficking of G protein-coupled receptors F2LR1/PAR2 (trypsin and tryspin-like enzyme receptor), OPRM1 (opioid receptor) and P2RY4 (UTD and UDP receptor) from the Golgi to the plasma membrane, thus contributing to receptor resensitization. In addition to its cargo receptor activity, may also act as a protein channel after oligomerization, facilitating the post-translational entry of leaderless cytoplasmic cargo into the ERGIC. Involved in the translocation into ERGIC, the vesicle entry and the secretion of leaderless cargos (lacking the secretion signal sequence), including the mature form of interleukin 1/IL-1 family members, the alpha-crystallin B chain HSPB5, the carbohydrate-binding proteins galectin-1/LGALS1 and galectin-3/LGALS3, the microtubule-associated protein Tau/MAPT, and the annexin A1/ANXA1; the translocation process is dependent on cargo protein unfolding and enhanced by chaperones HSP90AB1 and HSP90B1/GRP9. Could also associates with the presenilin-dependent gamma-secretase complex in order to regulate gamma-cleavages of the amyloid beta A4 protein to yield amyloid-beta 40/Abeta40. In Bos taurus (Bovine), this protein is Transmembrane emp24 domain-containing protein 10 (TMED10).